Reading from the N-terminus, the 242-residue chain is Transcriptional regulatory protein GltR (242 aa).

In terms of domain architecture, Response regulatory spans 7–123; sequence SILLVDDDQE…ELLARIKALL (117 aa). Asp56 bears the 4-aspartylphosphate mark. The segment at residues 134–234 is a DNA-binding region (ompR/PhoB-type); sequence GDVLAFEDWR…VRGSGYLLAA (101 aa).

Phosphorylated by GtrS.

The protein resides in the cytoplasm. With respect to regulation, phosphorylation of GltR induces its dissociation from DNA leading to transcriptional activation. Functionally, member of the two-component regulatory system GtrS/GltR involved in the regulation of glucose metabolism and transport, as well as regulation of the exotoxin A gene expression. GltR controls the transcription of genes involved in glucose metabolism (glk and edd/gap-1) and transport (oprB) as well as the expression of toxA that encodes exotoxin A, the primary virulence factor. Acts as a repressor that is released from its target operators upon phosphorylation. In terms of biological role, contributes to modulation of the type III secretion system (T3SS) in response to host cells via the regulation of the OprB transport system. In Pseudomonas aeruginosa (strain ATCC 15692 / DSM 22644 / CIP 104116 / JCM 14847 / LMG 12228 / 1C / PRS 101 / PAO1), this protein is Transcriptional regulatory protein GltR.